Here is a 227-residue protein sequence, read N- to C-terminus: UPF0173 metal-dependent hydrolase BCAH187_A4741 (227 aa).

Belongs to the UPF0173 family.

This chain is UPF0173 metal-dependent hydrolase BCAH187_A4741, found in Bacillus cereus (strain AH187).